The following is a 267-amino-acid chain: Indole-3-glycerol phosphate synthase (267 aa).

Belongs to the TrpC family.

The catalysed reaction is 1-(2-carboxyphenylamino)-1-deoxy-D-ribulose 5-phosphate + H(+) = (1S,2R)-1-C-(indol-3-yl)glycerol 3-phosphate + CO2 + H2O. The protein operates within amino-acid biosynthesis; L-tryptophan biosynthesis; L-tryptophan from chorismate: step 4/5. The chain is Indole-3-glycerol phosphate synthase from Verminephrobacter eiseniae (strain EF01-2).